The primary structure comprises 639 residues: PTS-dependent dihydroxyacetone kinase operon regulatory protein (639 aa).

The segment at 1-318 (MSGAFNNDGR…MRQLMTSQLG (318 aa)) is sensor domain. Residues 52 to 189 (AMLTLGQAAL…AIAREVGNLL (138 aa)) form the GAF domain. Residues 203 to 265 (NQLNALLESM…AVLQQAIKQA (63 aa)) enclose the PAS domain. The region spanning 327-552 (MPQDDPQTRR…LYSVIENLAL (226 aa)) is the Sigma-54 factor interaction domain. ATP contacts are provided by residues 355 to 362 (GEEGVGKA) and 415 to 424 (AHGGTLFLEK).

In terms of assembly, homodimer. DhaR forms complexes with DhaK and DhaL-ADP.

Positively regulates the dhaKLM operon from a sigma-70 promoter. Represses its own expression. This is PTS-dependent dihydroxyacetone kinase operon regulatory protein from Escherichia coli (strain K12).